The following is a 333-amino-acid chain: Nucleoid-associated protein APL_0429 (333 aa).

It belongs to the YejK family.

It localises to the cytoplasm. The protein localises to the nucleoid. This Actinobacillus pleuropneumoniae serotype 5b (strain L20) protein is Nucleoid-associated protein APL_0429.